A 344-amino-acid chain; its full sequence is MTTRLADIAAQAGVSEATVSRVLNGKPGVAATTRQSVLAALDVLGYERPVRLRQRSEGLVGLITPELENPIFPALAQVIGQALTRQGYTPVLATQTPGGSTEDELTEMLVDRGVAGIIYVSGLHADTTADMQRYERLRAQGVPFVLVDGFSSQVQAPFISPDDRAAMSLAVTHLVSLGHTRIGLALGPKRFVPVQRKIEGFVRTVQDQLGLSAETVEKELVQHSLYTLEGGQAAASALIGRDCTAVVCASDMMALGAIRAARQLGLDVPKDVSVVGFDDSPLIAFTDPPLTTVRKPVPAMGQAAVRTLLEEIGGTPAPHSEFVFMPELVVRGSTASAPGERGRP.

An HTH lacI-type domain is found at 1-54 (MTTRLADIAAQAGVSEATVSRVLNGKPGVAATTRQSVLAALDVLGYERPVRLRQ). The H-T-H motif DNA-binding region spans 5 to 24 (LADIAAQAGVSEATVSRVLN).

In terms of biological role, transcriptional repressor of the maltosaccharide utilization operon malEFG. This Streptomyces coelicolor (strain ATCC BAA-471 / A3(2) / M145) protein is HTH-type transcriptional regulator MalR (malR).